Here is a 631-residue protein sequence, read N- to C-terminus: Protein FRIABLE 1 (631 aa).

Over residues 1–13 the composition is skewed to low complexity; sequence MSVGVPVNPSSSS. The interval 1–36 is disordered; that stretch reads MSVGVPVNPSSSSQLPAAPTTTTRRRVADSQEDHSH. Topologically, residues 1-120 are cytoplasmic; that stretch reads MSVGVPVNPS…NMRSTTNLGR (120 aa). Residues 26–36 are compositionally biased toward basic and acidic residues; the sequence is RVADSQEDHSH. The helical; Signal-anchor for type II membrane protein transmembrane segment at 121-141 threads the bilayer; that stretch reads FILTLLSILVVTFFLIVALSG. The Lumenal portion of the chain corresponds to 142–631; the sequence is GVGRRRKHVE…RPSLRAQSLR (490 aa). N246, N329, and N364 each carry an N-linked (GlcNAc...) asparagine glycan. 384–386 is a substrate binding site; that stretch reads HLR. Residues N398 and N425 are each glycosylated (N-linked (GlcNAc...) asparagine).

This sequence belongs to the glycosyltransferase GT106 family. In terms of tissue distribution, ubiquitous. Strong expression in young seedlings, particularly at the junction between hypocotyl and root, in emerging cotyledons, and in parts of the roots. Also detected in the inflorescence (sepals, petals, mature pollen and siliques) and rosette leaves.

It localises to the golgi apparatus membrane. Its pathway is glycan metabolism. Functionally, glycosyltransferase required for normal cell adhesion and cell wall integrity. In Arabidopsis thaliana (Mouse-ear cress), this protein is Protein FRIABLE 1.